We begin with the raw amino-acid sequence, 334 residues long: N-acetyl-gamma-glutamyl-phosphate reductase (334 aa).

Cys154 is a catalytic residue.

It belongs to the NAGSA dehydrogenase family. Type 1 subfamily.

The protein localises to the cytoplasm. It catalyses the reaction N-acetyl-L-glutamate 5-semialdehyde + phosphate + NADP(+) = N-acetyl-L-glutamyl 5-phosphate + NADPH + H(+). It functions in the pathway amino-acid biosynthesis; L-arginine biosynthesis; N(2)-acetyl-L-ornithine from L-glutamate: step 3/4. Functionally, catalyzes the NADPH-dependent reduction of N-acetyl-5-glutamyl phosphate to yield N-acetyl-L-glutamate 5-semialdehyde. In Buchnera aphidicola subsp. Acyrthosiphon pisum (strain Tuc7), this protein is N-acetyl-gamma-glutamyl-phosphate reductase.